A 506-amino-acid polypeptide reads, in one-letter code: MQGAYCVAVALLIAASGQAAANFGLEEPHQAPDSDFMASADTIDEMLQSRVLQVSHYPKDDLMLLAGNEERMLLARSNYLTKIPIPESIMTAANTMRMEGEASAIEAASKNVNQLRSNKRQPVASILNNVARHMSTTPDSDKFLVAVENDRPLVLAKRQRSAAITENGAKFAKQDDYRPVLSGPFTTNDEASNGRHNNQLFTLKALQLDKNENAGNVEDLWQEKKVSNRDLFHLLDEYENSAYLTVVSRLEANAIEAISKNSIRLESNKGKPIAPTPNIKVDQELYAPPDTGKSPVLVSTNIPYILAKRLKNEPPSAIIYNVAGFLAQHDYRPAPSGSSAISADAPNGQLDNQLITQKAFWLDKNKHIDDVESLFKEDTVEHLSHLREGNGESAHFTAVDRQSEPIVWPKDSAVFPQPQKKVVLNEEVNKVHEAFLKAFNLPFHQYLRETVTMLGIARWKRNSSPNSRAAISTLKIFAKNVDPKKLPKLLGTDFAKLQGDKKKHVA.

An N-terminal signal peptide occupies residues 1–19 (MQGAYCVAVALLIAASGQA). The RxLR-dEER signature appears at 50 to 71 (RVLQVSHYPKDDLMLLAGNEER).

Belongs to the RxLR effector family.

The protein localises to the secreted. Its subcellular location is the host nucleus. Secreted effector that completely suppresses the host cell death induced by cell death-inducing proteins. This Plasmopara viticola (Downy mildew of grapevine) protein is Secreted RxLR effector protein 134.